The primary structure comprises 185 residues: uncharacterized protein (185 aa).

A run of 4 helical transmembrane segments spans residues 5–25 (SFLI…RIWL), 63–83 (LATV…LILI), 97–117 (FLGL…VLLI), and 149–169 (IIPA…GLQF).

Belongs to the YggT family.

The protein resides in the cell membrane. This is an uncharacterized protein from Vibrio alginolyticus.